We begin with the raw amino-acid sequence, 252 residues long: MRKKIVVGNWKMNKTIAEAVELSSAIIDQLGEVSASCEVGIAPAFPALSGVHGVISGTGIHLAAQNCHYEDDGAFTGEVSVRMLDEAGCSYVIVGHSERRQYFGDTNPVVNLKVKKALSAGLNVILCVGETLDEREKGITTEVVTCQVKEGLEGVADIGDIVIAYEPVWAIGTGKTASSLQAQEVHASIRATVAGLYSEPAAAGVRIQYGGSVKPSNAEELFAMPDIDGGLIGGASLNAEDFVAIVKAAEKS.

Position 9–11 (9–11 (NWK)) interacts with substrate. The active-site Electrophile is the His-96. Residue Glu-166 is the Proton acceptor of the active site. Substrate contacts are provided by residues Gly-172, Ser-212, and 233-234 (GG).

Belongs to the triosephosphate isomerase family. In terms of assembly, homodimer.

It is found in the cytoplasm. The enzyme catalyses D-glyceraldehyde 3-phosphate = dihydroxyacetone phosphate. It functions in the pathway carbohydrate biosynthesis; gluconeogenesis. It participates in carbohydrate degradation; glycolysis; D-glyceraldehyde 3-phosphate from glycerone phosphate: step 1/1. Its function is as follows. Involved in the gluconeogenesis. Catalyzes stereospecifically the conversion of dihydroxyacetone phosphate (DHAP) to D-glyceraldehyde-3-phosphate (G3P). The protein is Triosephosphate isomerase of Prosthecochloris aestuarii (strain DSM 271 / SK 413).